A 511-amino-acid chain; its full sequence is Maturase K (511 aa).

This sequence belongs to the intron maturase 2 family. MatK subfamily.

It localises to the plastid. The protein localises to the chloroplast. Its function is as follows. Usually encoded in the trnK tRNA gene intron. Probably assists in splicing its own and other chloroplast group II introns. The protein is Maturase K of Campsis radicans (Trumpet creeper).